The following is a 121-amino-acid chain: MIQQETFLTVADNSGAKRIQCIRVLGTNRRYAHVGDVIVATVKDAMPNMGVKKSDIVKAVVVRTKATMRRDTGNSIRFDDNAAVIINDDKNPKGTRVFGPVARELRERSFTKIVSLAPEVI.

Belongs to the universal ribosomal protein uL14 family. In terms of assembly, part of the 50S ribosomal subunit. Forms a cluster with proteins L3 and L19. In the 70S ribosome, L14 and L19 interact and together make contacts with the 16S rRNA in bridges B5 and B8.

In terms of biological role, binds to 23S rRNA. Forms part of two intersubunit bridges in the 70S ribosome. The polypeptide is Large ribosomal subunit protein uL14 (Synechococcus sp. (strain CC9311)).